A 641-amino-acid polypeptide reads, in one-letter code: SUMO-activating enzyme subunit 2 (641 aa).

ATP is bound by residues 24 to 29, Asp48, 56 to 59, Lys72, 95 to 96, and 117 to 122; these read GAGGIG, NLNR, SI, and DNNAAR. The Zn(2+) site is built by Cys158 and Cys161. Cys173 functions as the Glycyl thioester intermediate in the catalytic mechanism. Lys190 participates in a covalent cross-link: Glycyl lysine isopeptide (Lys-Gly) (interchain with G-Cter in SUMO). Lys236 participates in a covalent cross-link: Glycyl lysine isopeptide (Lys-Gly) (interchain with G-Cter in SUMO1). Residues Lys257 and Lys275 each participate in a glycyl lysine isopeptide (Lys-Gly) (interchain with G-Cter in SUMO) cross-link. Zn(2+) is bound by residues Cys439 and Cys442. The disordered stretch occupies residues 546 to 641; the sequence is GDVPEKGPQK…EEDDDIIALD (96 aa). A compositionally biased stretch (polar residues) spans 556–579; that stretch reads PSEQSVKNITNGSDDGAQPSTSKA. Over residues 582–594 the composition is skewed to acidic residues; sequence QDDVLIVDSDEES. Residues Lys610, Lys612, and Lys623 each participate in a glycyl lysine isopeptide (Lys-Gly) (interchain with G-Cter in SUMO) cross-link. Positions 630–641 are enriched in acidic residues; it reads PVEEDDDIIALD.

The protein belongs to the ubiquitin-activating E1 family. In terms of assembly, heterodimer of sae1 and uba2/sae2. The heterodimer corresponds to the two domains that are encoded on a single polypeptide chain in ubiquitin-activating enzyme E1. Interacts with ube2i. Sumoylated with SUMO1 and SUMO2/3 and by UBC9. Sumoylation at Lys-236 inhibits enzymatic activity. Sumoylation at the C-terminal lysine cluster plays an essential role in nuclear trafficking.

The protein resides in the cytoplasm. It localises to the nucleus. Its pathway is protein modification; protein sumoylation. The heterodimer acts as an E1 ligase for sumo1, sumo2, and sumo3. It mediates ATP-dependent activation of sumo proteins followed by formation of a thioester bond between a sumo protein and a conserved active site cysteine residue on uba2/sae2. The chain is SUMO-activating enzyme subunit 2 (uba2) from Xenopus tropicalis (Western clawed frog).